Reading from the N-terminus, the 341-residue chain is Uroporphyrinogen decarboxylase (341 aa).

Substrate contacts are provided by residues 23–27, Asp73, Tyr148, Ser203, and His318; that span reads RQAGR.

Belongs to the uroporphyrinogen decarboxylase family. In terms of assembly, homodimer.

Its subcellular location is the cytoplasm. The enzyme catalyses uroporphyrinogen III + 4 H(+) = coproporphyrinogen III + 4 CO2. The protein operates within porphyrin-containing compound metabolism; protoporphyrin-IX biosynthesis; coproporphyrinogen-III from 5-aminolevulinate: step 4/4. Catalyzes the decarboxylation of four acetate groups of uroporphyrinogen-III to yield coproporphyrinogen-III. This is Uroporphyrinogen decarboxylase from Brucella ovis (strain ATCC 25840 / 63/290 / NCTC 10512).